The chain runs to 64 residues: MHCLPVPVILLLLIASTPSVDARPKTKDDVPPASFHGADNANRILRTLWNLRGCCEDKTCCFIG.

The first 22 residues, 1 to 22 (MHCLPVPVILLLLIASTPSVDA), serve as a signal peptide directing secretion. A propeptide spanning residues 23–51 (RPKTKDDVPPASFHGADNANRILRTLWNL) is cleaved from the precursor. Residue Ile-63 is modified to Isoleucine amide.

This sequence belongs to the conotoxin T superfamily. Contains 2 disulfide bonds that can be either 'C1-C3, C2-C4' or 'C1-C4, C2-C3', since these disulfide connectivities have been observed for conotoxins with cysteine framework V (for examples, see AC P0DQQ7 and AC P81755). In terms of tissue distribution, expressed by the venom duct.

Its subcellular location is the secreted. In Conus tessulatus (Tessellate cone), this protein is Conotoxin Ts-011.